Consider the following 1010-residue polypeptide: ATP-dependent DNA/RNA helicase DHX36 (1010 aa).

The tract at residues Met-1–Gly-54 is required for recruitment to cytoplasmic stress granules. A disordered region spans residues Met-1–Arg-63. Positions Met-1–Thr-107 are required for the pre-miR-134 transport. The tract at residues Met-1 to Met-202 is necessary for nuclear and nucleolar caps localizations. Gly residues predominate over residues Arg-16–Gly-51. Residues His-56 to Lys-78 are DSM (DHX36-specific motif). The tract at residues His-56 to Lys-108 is required for G4-DNA- and G4-RNA-binding. RecA-like domain regions lie at residues Asn-109–Ile-388 and Pro-389–Leu-630. One can recognise a Helicase ATP-binding domain in the interval Val-219–Pro-389. Gly-235–Thr-240 is an ATP binding site. Positions Arg-267 to Gln-319 are necessary for interaction with single-stranded DNA at the 3'-end of the G4-DNA structure. A DEAH box motif is present at residues Asp-336–His-339. 2 residues coordinate Mg(2+): Glu-337 and His-339. One can recognise a Helicase C-terminal domain in the interval Ala-479 to Arg-649. The segment at Trp-500 to Ser-559 is necessary for interaction with single-stranded DNA at the 3'-end of the G4-DNA structure. Residues Asp-519–Met-530 carry the Nuclear localization signal motif. ATP is bound by residues Ser-559 and Arg-604–Arg-607. The tract at residues Pro-631–Val-700 is WH domain. 3 necessary for interaction with single-stranded DNA at the 3'-end of the G4-DNA structure regions span residues Glu-640–Pro-699, Asn-851–Tyr-862, and His-872–Tyr-902. Residues Pro-843–Val-907 form an OB-fold-like subdomains region. Lys-949 carries the N6-acetyllysine modification. Phosphoserine is present on Ser-965.

In terms of assembly, found in a multi-helicase-TICAM1 complex at least composed of DHX36, DDX1, DDX21 and TICAM1; this complex exists in resting cells with or without dsRNA poly(I:C) ligand stimulation. Interacts (via C-terminus) with TICAM1 (via TIR domain). Interacts (via C-terminus) with DDX21; this interaction serves as bridges to TICAM1. Interacts with TERT; this interaction is dependent on the ability of DHX36 to bind to the G-quadruplex RNA (G4-RNA) structure present in the telomerase RNA template component (TERC). Interacts with DKC1; this interaction is dependent on the ability of DHX36 to bind to the G4-RNA structure present in TERC. Interacts with PARN; this interaction stimulates PARN to enhance uPA mRNA decay. Interacts with EXOSC3; this interaction occurs in a RNase-insensitive manner. Interacts with EXOSC10; this interaction occurs in a RNase-insensitive manner. Interacts with ILF3; this interaction occurs in a RNA-dependent manner. Interacts with ELAVL1; this interaction occurs in an RNA-dependent manner. Interacts with DDX5; this interaction occurs in a RNA-dependent manner. Interacts with DDX17; this interaction occurs in a RNA-dependent manner. Interacts with HDAC1; this interaction occurs in a RNA-dependent manner. Interacts with HDAC3; this interaction occurs in a RNA-dependent manner. Interacts with HDAC4. Interacts with AGO1. Interacts with AGO2. Interacts with ERCC6. It depends on Mg(2+) as a cofactor.

Its subcellular location is the nucleus. The protein resides in the cytoplasm. The protein localises to the cytosol. It is found in the stress granule. It localises to the nucleus speckle. Its subcellular location is the chromosome. The protein resides in the telomere. The protein localises to the mitochondrion. It is found in the perikaryon. It localises to the cell projection. Its subcellular location is the dendrite. The protein resides in the axon. It carries out the reaction ATP + H2O = ADP + phosphate + H(+). ATPase activity is enhanced in the presence of homomeric poly(U) RNAs, but not by double-stranded DNA (dsDNA), double-stranded RNA (dsRNA) and tRNA. Its function is as follows. Multifunctional ATP-dependent helicase that unwinds G-quadruplex (G4) structures. Plays a role in many biological processes such as genomic integrity, gene expression regulations and as a sensor to initiate antiviral responses. G4 structures correspond to helical structures containing guanine tetrads. Binds with high affinity to and unwinds G4 structures that are formed in nucleic acids (G4-DNA and G4-RNA). Plays a role in genomic integrity. Converts the G4-RNA structure present in telomerase RNA template component (TREC) into a double-stranded RNA to promote P1 helix formation that acts as a template boundary ensuring accurate reverse transcription. Plays a role in transcriptional regulation. Resolves G4-DNA structures in promoters of genes, such as YY1, KIT/c-kit and ALPL and positively regulates their expression. Plays a role in post-transcriptional regulation. Unwinds a G4-RNA structure located in the 3'-UTR polyadenylation site of the pre-mRNA TP53 and stimulates TP53 pre-mRNA 3'-end processing in response to ultraviolet (UV)-induced DNA damage. Binds to the precursor-microRNA-134 (pre-miR-134) terminal loop and regulates its transport into the synapto-dendritic compartment. Involved in the pre-miR-134-dependent inhibition of target gene expression and the control of dendritic spine size. Plays a role in the regulation of cytoplasmic mRNA translation and mRNA stability. Binds to both G4-RNA structures and alternative non-quadruplex-forming sequence within the 3'-UTR of the PITX1 mRNA regulating negatively PITX1 protein expression. Binds to both G4-RNA structure in the 5'-UTR and AU-rich elements (AREs) localized in the 3'-UTR of NKX2-5 mRNA to either stimulate protein translation or induce mRNA decay in an ELAVL1-dependent manner, respectively. Also binds to ARE sequences present in several mRNAs mediating exosome-mediated 3'-5' mRNA degradation. Involved in cytoplasmic urokinase-type plasminogen activator (uPA) mRNA decay. Component of a multi-helicase-TICAM1 complex that acts as a cytoplasmic sensor of viral double-stranded RNA (dsRNA) and plays a role in the activation of a cascade of antiviral responses including the induction of pro-inflammatory cytokines via the adapter molecule TICAM1. Required for the early embryonic development and hematopoiesis. Involved in the regulation of cardioblast differentiation and proliferation during heart development. Involved in spermatogonia differentiation. May play a role in ossification. The sequence is that of ATP-dependent DNA/RNA helicase DHX36 from Bos taurus (Bovine).